We begin with the raw amino-acid sequence, 254 residues long: MYKKKIKKNTITHFGFQNVPTFIKSYLVSNVFHKVATKYDLMNDLMSFGIHRIWKQFLIQQSEVHNGYKVLDLAGGTGDLSIKFSKLVGKKGIVILLDNNDTMLRLGQKKLRNLGILNNVHYIQANAEFLPFSENTFNCVAISFGLRNFTYKQKSLYEIYRVLRPGGKLLILDFSIPTSKLLTILYDLYSFHIIPKIGKIIAQDSKSYQYLVESIRMHPDQETLKNMILSIGFNDVQYFNMTGGIAALHCAYKY.

S-adenosyl-L-methionine contacts are provided by residues Thr-77, Asp-98, 126–127 (NA), and Ser-143.

The protein belongs to the class I-like SAM-binding methyltransferase superfamily. MenG/UbiE family.

The enzyme catalyses a 2-demethylmenaquinol + S-adenosyl-L-methionine = a menaquinol + S-adenosyl-L-homocysteine + H(+). The catalysed reaction is a 2-methoxy-6-(all-trans-polyprenyl)benzene-1,4-diol + S-adenosyl-L-methionine = a 5-methoxy-2-methyl-3-(all-trans-polyprenyl)benzene-1,4-diol + S-adenosyl-L-homocysteine + H(+). The protein operates within quinol/quinone metabolism; menaquinone biosynthesis; menaquinol from 1,4-dihydroxy-2-naphthoate: step 2/2. It functions in the pathway cofactor biosynthesis; ubiquinone biosynthesis. Functionally, methyltransferase required for the conversion of demethylmenaquinol (DMKH2) to menaquinol (MKH2) and the conversion of 2-polyprenyl-6-methoxy-1,4-benzoquinol (DDMQH2) to 2-polyprenyl-3-methyl-6-methoxy-1,4-benzoquinol (DMQH2). This chain is Ubiquinone/menaquinone biosynthesis C-methyltransferase UbiE, found in Blochmanniella floridana.